The following is a 326-amino-acid chain: Biotin synthase (326 aa).

In terms of domain architecture, Radical SAM core spans 50-279 (FNGEKVDVEQ…ESVIKISGGR (230 aa)). Residues C68, C72, and C75 each coordinate [4Fe-4S] cluster. Residues C112, C145, C204, and K274 each coordinate [2Fe-2S] cluster.

Belongs to the radical SAM superfamily. Biotin synthase family. As to quaternary structure, homodimer. It depends on [4Fe-4S] cluster as a cofactor. Requires [2Fe-2S] cluster as cofactor.

It carries out the reaction (4R,5S)-dethiobiotin + (sulfur carrier)-SH + 2 reduced [2Fe-2S]-[ferredoxin] + 2 S-adenosyl-L-methionine = (sulfur carrier)-H + biotin + 2 5'-deoxyadenosine + 2 L-methionine + 2 oxidized [2Fe-2S]-[ferredoxin]. It functions in the pathway cofactor biosynthesis; biotin biosynthesis; biotin from 7,8-diaminononanoate: step 2/2. In terms of biological role, catalyzes the conversion of dethiobiotin (DTB) to biotin by the insertion of a sulfur atom into dethiobiotin via a radical-based mechanism. The sequence is that of Biotin synthase from Nitrosopumilus maritimus (strain SCM1).